Reading from the N-terminus, the 186-residue chain is Elongation factor P (186 aa).

This sequence belongs to the elongation factor P family.

It is found in the cytoplasm. The protein operates within protein biosynthesis; polypeptide chain elongation. In terms of biological role, involved in peptide bond synthesis. Stimulates efficient translation and peptide-bond synthesis on native or reconstituted 70S ribosomes in vitro. Probably functions indirectly by altering the affinity of the ribosome for aminoacyl-tRNA, thus increasing their reactivity as acceptors for peptidyl transferase. The sequence is that of Elongation factor P from Prochlorococcus marinus subsp. pastoris (strain CCMP1986 / NIES-2087 / MED4).